Reading from the N-terminus, the 196-residue chain is SAGA-associated factor 11 homolog (196 aa).

Residues 102-123 form an SGF11-type zinc finger; the sequence is CTCPNCDRLVAAARFAPHLEKC. A disordered region spans residues 140 to 196; that stretch reads TKEGTSASSNSSYVHSGANAGGTDDEDDVDWSSDKRKKKSTQNSRNNGSKKNNGKTF. Residues 142–153 show a composition bias toward polar residues; the sequence is EGTSASSNSSYV. At serine 172 the chain carries Phosphoserine. Residues 182-196 are compositionally biased toward low complexity; sequence NSRNNGSKKNNGKTF.

The protein belongs to the SGF11 family. Component of some SAGA transcription coactivator-HAT complexes, at least composed of Ada2b, not/nonstop, Pcaf/Gcn5, Sgf11 and Spt3. Within the SAGA complex, Sgf11, e(y)2, and not/nonstop form an additional subcomplex of SAGA called the DUB module (deubiquitination module). Interacts directly with not/nonstop. Interacts with the AMEX complex component xmas-2. Interacts with Cbp80; important for promoter recruitment of Sgf11 that is not associated with the DUB module.

Its subcellular location is the nucleus. It is found in the nucleoplasm. The protein resides in the cytoplasm. In terms of biological role, component of the transcription regulatory histone acetylation (HAT) complex SAGA, a multiprotein complex that activates transcription by remodeling chromatin and mediating histone acetylation and deubiquitination. Within the SAGA complex, participates in a subcomplex that specifically deubiquitinates histone H2B. The SAGA complex is recruited to specific gene promoters by activators, where it is required for transcription. Required for nuclear receptor-mediated transactivation. Binds independently on SAGA to promoters in an RNA-dependent manner. Binds to mRNA and is essential for total mRNA export from the nucleus. Required to counteract heterochromatin silencing. Controls the development of neuronal connectivity in visual system by being required for accurate axon targeting in the optic lobe. Required for expression of ecdysone-induced genes such as br/broad. This is SAGA-associated factor 11 homolog from Drosophila persimilis (Fruit fly).